Here is a 124-residue protein sequence, read N- to C-terminus: MaFF-interacting protein (124 aa).

Residues 54-96 (LVSEVEELYKSITALREKLLQAEQSLRNLKDIHMSLEKDVTAM) adopt a coiled-coil conformation.

The protein belongs to the tektin family. In terms of assembly, interacts with MIS18A. Interacts (via its coiled-coil region) with MAFF. Strongly expressed in brain, kidney and ovary. Moderately expressed in liver, spleen, thymus, prostate, testis, small intestine and colon. Weakly expressed in heart, placenta, lung and leukocytes.

Its subcellular location is the cytoplasm. It is found in the nucleus. It localises to the nucleolus. Functionally, acts as a coactivator of MAFF transcriptional activity. Inhibits cell growth and colony-forming efficiency. The chain is MaFF-interacting protein (MAFIP) from Homo sapiens (Human).